The chain runs to 440 residues: Chaperone SurA (440 aa).

The N-terminal stretch at 1-25 (MGTKLSSRSPFSLPFLTLLAGMAIA) is a signal peptide. PpiC domains are found at residues 182–283 (SDEY…KLVE) and 294–392 (IDQT…QVIE).

The protein localises to the periplasm. It catalyses the reaction [protein]-peptidylproline (omega=180) = [protein]-peptidylproline (omega=0). Its function is as follows. Chaperone involved in the correct folding and assembly of outer membrane proteins. Recognizes specific patterns of aromatic residues and the orientation of their side chains, which are found more frequently in integral outer membrane proteins. May act in both early periplasmic and late outer membrane-associated steps of protein maturation. The chain is Chaperone SurA from Nitrosospira multiformis (strain ATCC 25196 / NCIMB 11849 / C 71).